Consider the following 153-residue polypeptide: Virion assembly protein OPG100 (153 aa).

Belongs to the orthopoxvirus OPG100 family. Homodimer. Part of a complex composed of the kinase OPG054, OPG092, OPG114, OPG115, OPG142 and OPG157. Interacts with OPG175.

It localises to the virion. The protein localises to the host cytoplasm. In terms of biological role, late protein which is a part of a large complex required for early virion morphogenesis. This complex participates in the formation of virosomes and the incorporation of virosomal contents into nascent immature virions. Plays a role in DNA packaging during immature virions (IV) formation. The polypeptide is Virion assembly protein OPG100 (OPG100) (Vaccinia virus (strain Western Reserve) (VACV)).